The primary structure comprises 442 residues: D-inositol 3-phosphate glycosyltransferase (442 aa).

H15 lines the 1D-myo-inositol 3-phosphate pocket. UDP-N-acetyl-alpha-D-glucosamine is bound by residues 21 to 22 (QP) and G29. 1D-myo-inositol 3-phosphate contacts are provided by residues 26-31 (DAGGMN), K84, Y117, T141, and R161. UDP-N-acetyl-alpha-D-glucosamine contacts are provided by R235, K240, and Q299. Mg(2+) is bound by residues Y308, R309, and S311. Residues E321 and E329 each coordinate UDP-N-acetyl-alpha-D-glucosamine. T335 lines the Mg(2+) pocket.

It belongs to the glycosyltransferase group 1 family. MshA subfamily. As to quaternary structure, homodimer.

The enzyme catalyses 1D-myo-inositol 3-phosphate + UDP-N-acetyl-alpha-D-glucosamine = 1D-myo-inositol 2-acetamido-2-deoxy-alpha-D-glucopyranoside 3-phosphate + UDP + H(+). In terms of biological role, catalyzes the transfer of a N-acetyl-glucosamine moiety to 1D-myo-inositol 3-phosphate to produce 1D-myo-inositol 2-acetamido-2-deoxy-glucopyranoside 3-phosphate in the mycothiol biosynthesis pathway. This is D-inositol 3-phosphate glycosyltransferase from Rhodococcus erythropolis (strain PR4 / NBRC 100887).